The following is a 572-amino-acid chain: Proline--tRNA ligase (572 aa).

The protein belongs to the class-II aminoacyl-tRNA synthetase family. ProS type 1 subfamily. As to quaternary structure, homodimer.

Its subcellular location is the cytoplasm. It carries out the reaction tRNA(Pro) + L-proline + ATP = L-prolyl-tRNA(Pro) + AMP + diphosphate. In terms of biological role, catalyzes the attachment of proline to tRNA(Pro) in a two-step reaction: proline is first activated by ATP to form Pro-AMP and then transferred to the acceptor end of tRNA(Pro). As ProRS can inadvertently accommodate and process non-cognate amino acids such as alanine and cysteine, to avoid such errors it has two additional distinct editing activities against alanine. One activity is designated as 'pretransfer' editing and involves the tRNA(Pro)-independent hydrolysis of activated Ala-AMP. The other activity is designated 'posttransfer' editing and involves deacylation of mischarged Ala-tRNA(Pro). The misacylated Cys-tRNA(Pro) is not edited by ProRS. In Caldicellulosiruptor saccharolyticus (strain ATCC 43494 / DSM 8903 / Tp8T 6331), this protein is Proline--tRNA ligase.